Reading from the N-terminus, the 441-residue chain is Probable membrane metalloprotease ARASP2, chloroplastic (441 aa).

The transit peptide at 1-84 (MLLNISSSPI…DFGSLESVLE (84 aa)) directs the protein to the chloroplast. A Zn(2+)-binding site is contributed by His96. Glu97 is an active-site residue. His100 provides a ligand contact to Zn(2+). A helical membrane pass occupies residues 171-191 (VIVVSAGIVANVIFAYAIIFT). Residues 196–249 (VGLPVQESFPGVLVPDVKSFSAASRDGLLPGDVILAVDGTELSNSGSDSVSKVV) form the PDZ domain. 2 helical membrane passes run 373–393 (LAVI…ALIL) and 407–427 (VEQG…LFLI).

Belongs to the peptidase M50A family. It depends on Zn(2+) as a cofactor.

The protein localises to the plastid. It localises to the chloroplast inner membrane. Metalloprotease essential for chloroplast and plant development. May be involved in regulated intramembrane proteolysis (RIP). The polypeptide is Probable membrane metalloprotease ARASP2, chloroplastic (Arabidopsis thaliana (Mouse-ear cress)).